The chain runs to 285 residues: Probable endonuclease 4 (285 aa).

9 residues coordinate Zn(2+): histidine 69, histidine 109, glutamate 145, aspartate 179, histidine 182, histidine 216, aspartate 229, histidine 231, and glutamate 261.

This sequence belongs to the AP endonuclease 2 family. Zn(2+) serves as cofactor.

The catalysed reaction is Endonucleolytic cleavage to 5'-phosphooligonucleotide end-products.. Functionally, endonuclease IV plays a role in DNA repair. It cleaves phosphodiester bonds at apurinic or apyrimidinic (AP) sites, generating a 3'-hydroxyl group and a 5'-terminal sugar phosphate. The polypeptide is Probable endonuclease 4 (Escherichia coli O1:K1 / APEC).